Reading from the N-terminus, the 339-residue chain is MVREEVAGSTQTLQWKCVESRVDSKRLYYGRFILSPLRKGQADTVGIALRRALLGEIEGTCITRAKFGSVPHEYSTIAGIEESVQEILLNLKEIVLRSNLYGVRDASICVKGPRYITAQDIILPPSVETVDTAQPIANLTEPIDFCIDLQIKRDRGYQTELRKNYQDGSYPIDAVSMPVRNVNYSIFSCGNGNEKHEILFLEIWTNGSLTPKEALYEASRNLIDLFLPFLHAEEEGTSFEENKNRFTPPLFTFQKRLTNLKKNKKGIPLNCIFIDQLELTSRTYNCLKRANIHTLLDLLSKTEEDLMRIDSFRMEDRKHIWDTLEKHLPIDLLKNKLSF.

The alpha N-terminal domain (alpha-NTD) stretch occupies residues 1–233; that stretch reads MVREEVAGST…DLFLPFLHAE (233 aa). An alpha C-terminal domain (alpha-CTD) region spans residues 266-339; sequence GIPLNCIFID…IDLLKNKLSF (74 aa).

It belongs to the RNA polymerase alpha chain family. In terms of assembly, in plastids the minimal PEP RNA polymerase catalytic core is composed of four subunits: alpha, beta, beta', and beta''. When a (nuclear-encoded) sigma factor is associated with the core the holoenzyme is formed, which can initiate transcription.

It localises to the plastid. Its subcellular location is the chloroplast. The enzyme catalyses RNA(n) + a ribonucleoside 5'-triphosphate = RNA(n+1) + diphosphate. Functionally, DNA-dependent RNA polymerase catalyzes the transcription of DNA into RNA using the four ribonucleoside triphosphates as substrates. This is DNA-directed RNA polymerase subunit alpha from Hordeum bulbosum (Bulbous barley).